Here is an 892-residue protein sequence, read N- to C-terminus: NACHT, LRR and PYD domains-containing protein 6 (892 aa).

Residues 1 to 103 enclose the Pyrin domain; it reads MDQPEAPCSS…AAQLQERRLQ (103 aa). The disordered stretch occupies residues 158–181; sequence APEEAMGPAEEPEPGRARRSDTHT. Over residues 170–181 the composition is skewed to basic and acidic residues; sequence EPGRARRSDTHT. The NACHT domain occupies 196 to 513; that stretch reads LTVVLQGPAG…EFLAALSYLL (318 aa). 202–209 is an ATP binding site; that stretch reads GPAGIGKT. Residues 352 to 356 are disordered; the sequence is KDKKK. The LRR 1 repeat unit spans residues 462–487; the sequence is EKELEQLELRGSKVQTLFLSKKELPG. Positions 590–614 are disordered; the sequence is APEVTEGAKGLEDTEEPEEEEEGEE. Over residues 602–614 the composition is skewed to acidic residues; sequence DTEEPEEEEEGEE. LRR repeat units follow at residues 727 to 747, 755 to 778, 811 to 834, and 845 to 868; these read LCHL…VCRD, APAL…MLSE, SPAL…YLCA, and TLSL…KRAK.

Belongs to the NLRP family. In terms of assembly, homomultimer; forms the NLRP6 inflammasome polymeric complex, a filament composed of homopolymers in response to pathogens and other damage-associated signals. The core of NLRP6 inflammasomes consists of a signal sensor component (NLRP6), an adapter (PYCARD/ASC), which recruits effector pro-inflammatory caspases (CASP1 and CASP4). Interacts (via pyrin domain) with PYCARD/ASC (via pyrin domain); interaction takes place following NLRP6 activation and formation of liquid-liquid phase separation (LLPS), initiating nucleation which greatly enhances further addition of soluble PYCARD/ASC molecules to the speck in a prion-like polymerization process. Clustered PYCARD/ASC nucleates the formation of CASP1 (or possibly CASP4) filaments through the interaction of their respective CARD domains, acting as a platform for CASP1 polymerization. CASP1 filament formation increases local enzyme concentration, resulting in trans-autocleavage and activation. Active CASP1 then processes IL1B and IL18 precursors, leading to the release of mature cytokines in the extracellular milieu and inflammatory response. Interacts with DHX15. Post-translationally, polyubiquitinated with 'Lys-63'-linked chains, promoting the interaction with PYCARD/ASC and formation of the NLRP6 inflammasome. Deubiquitination by CYLD decreases the interaction with PYCARD/ASC. In terms of tissue distribution, expressed in peripheral blood leukocytes, predominantly in granulocytes and, at lower levels, in CD4(+) and CD8(+) T-cells. Expressed in colonic myofibroblasts (at protein level).

The protein localises to the cytoplasm. It localises to the cytosol. The protein resides in the inflammasome. It is found in the cell membrane. Its subcellular location is the nucleus membrane. Its function is as follows. Acts as the sensor component of the NLRP6 inflammasome, which mediates inflammasome activation in response to various pathogen-associated signals, leading to maturation and secretion of IL1B and IL18. Inflammasomes are supramolecular complexes that assemble in the cytosol in response to pathogens and other damage-associated signals and play critical roles in innate immunity and inflammation. Acts as a recognition receptor (PRR): recognizes and binds specific pathogens and other damage-associated signals, such as lipoteichoic acid (LTA), a cell-wall component of Gram-positive bacteria, or double stranded RNA (dsRNA). May also recognize and bind lipopolysaccharide (LPS), a major component of the outer membrane of Gram-negative bacteria; however, LPS is probably not a major activator of the NLRP6 inflammasome. Following LTA- or dsRNA-binding, NLRP6 undergoes liquid-liquid phase separation (LLPS), enhancing multivalent interactions, an essential step for the formation of the NLRP6 inflammasome polymeric complex. The NLRP6 inflammasome acts by promoting recruitment of effector pro-inflammatory caspases (CASP1 and/or CASP4) that catalyze maturation and secretion of IL1B and IL18 in the extracellular milieu. The NLRP6 inflammasome plays a central role in the maintenance of epithelial integrity and host defense against microbial infections in the intestine. Required to restrict infection against Gram-positive bacteria by recognizing lipoteichoic acid (LTA), leading to recruitment of CASP4 and CASP1, and subsequent maturation and secretion of IL1B and IL18. Involved in intestinal antiviral innate immunity together with DHX15: recognizes and binds viral dsRNA to restrict infection by enteric viruses through the interferon pathway and GSDMD-dependent release of IL18. Required to prevent infection by the apicomplexan parasite Cryptosporidium in enterocytes by promoting GSDMD-dependent release of IL18. The NLRP6 inflammasome may also regulate the gut microbiota composition by acting as a sensor of microbiota-associated metabolites to form a PYCARD/ASC-dependent inflammasome for downstream IL18 release and secretion of antimicrobial peptides. Essential for gut mucosal self-renewal and proliferation. Regulate mucus secretion in an inflammasome- and autophagy-dependent manner to prevent invasion by enteric bacteria,. During systemic bacterial infections, the NLRP6 inflammasome negatively regulates neutrophil recruitment and neutrophil extracellular traps (NETs) formation. May promote peripheral nerve recovery following injury via an inflammasome-independent mechanism. The protein is NACHT, LRR and PYD domains-containing protein 6 of Homo sapiens (Human).